A 251-amino-acid polypeptide reads, in one-letter code: Triosephosphate isomerase (251 aa).

9–11 contacts substrate; it reads NWK. Residue H94 is the Electrophile of the active site. The Proton acceptor role is filled by E166. Residues G172, S211, and 232 to 233 contribute to the substrate site; that span reads GG.

It belongs to the triosephosphate isomerase family. Homodimer.

The protein resides in the cytoplasm. The enzyme catalyses D-glyceraldehyde 3-phosphate = dihydroxyacetone phosphate. It functions in the pathway carbohydrate biosynthesis; gluconeogenesis. The protein operates within carbohydrate degradation; glycolysis; D-glyceraldehyde 3-phosphate from glycerone phosphate: step 1/1. Involved in the gluconeogenesis. Catalyzes stereospecifically the conversion of dihydroxyacetone phosphate (DHAP) to D-glyceraldehyde-3-phosphate (G3P). This is Triosephosphate isomerase from Xanthomonas axonopodis pv. citri (strain 306).